The primary structure comprises 1419 residues: DNA-directed RNA polymerase subunit beta' (1419 aa).

Residues cysteine 71, cysteine 73, cysteine 86, and cysteine 89 each coordinate Zn(2+). Aspartate 461, aspartate 463, and aspartate 465 together coordinate Mg(2+). Positions 815, 889, 896, and 899 each coordinate Zn(2+).

Belongs to the RNA polymerase beta' chain family. In terms of assembly, the RNAP catalytic core consists of 2 alpha, 1 beta, 1 beta' and 1 omega subunit. When a sigma factor is associated with the core the holoenzyme is formed, which can initiate transcription. The cofactor is Mg(2+). Zn(2+) serves as cofactor.

The catalysed reaction is RNA(n) + a ribonucleoside 5'-triphosphate = RNA(n+1) + diphosphate. DNA-dependent RNA polymerase catalyzes the transcription of DNA into RNA using the four ribonucleoside triphosphates as substrates. The chain is DNA-directed RNA polymerase subunit beta' from Actinobacillus succinogenes (strain ATCC 55618 / DSM 22257 / CCUG 43843 / 130Z).